The chain runs to 449 residues: Na(+)-translocating NADH-quinone reductase subunit A (449 aa).

This sequence belongs to the NqrA family. Composed of six subunits; NqrA, NqrB, NqrC, NqrD, NqrE and NqrF.

The catalysed reaction is a ubiquinone + n Na(+)(in) + NADH + H(+) = a ubiquinol + n Na(+)(out) + NAD(+). Functionally, NQR complex catalyzes the reduction of ubiquinone-1 to ubiquinol by two successive reactions, coupled with the transport of Na(+) ions from the cytoplasm to the periplasm. NqrA to NqrE are probably involved in the second step, the conversion of ubisemiquinone to ubiquinol. This is Na(+)-translocating NADH-quinone reductase subunit A from Serratia proteamaculans (strain 568).